A 142-amino-acid polypeptide reads, in one-letter code: Hemoglobin subunit alpha-1/2 (142 aa).

A Globin domain is found at 2 to 142; that stretch reads VLSPADKTNI…VSTVLTSKYR (141 aa). Residue S4 is modified to Phosphoserine. K8 is modified (N6-succinyllysine). The residue at position 9 (T9) is a Phosphothreonine. At K12 the chain carries N6-succinyllysine. At K17 the chain carries N6-acetyllysine; alternate. K17 is subject to N6-succinyllysine; alternate. Y25 bears the Phosphotyrosine mark. K41 carries the post-translational modification N6-succinyllysine. Position 59 (H59) interacts with O2. H88 contributes to the heme b binding site. S103 is modified (phosphoserine). T109 carries the post-translational modification Phosphothreonine. S125 is subject to Phosphoserine. Phosphothreonine occurs at positions 135 and 138. S139 carries the post-translational modification Phosphoserine.

This sequence belongs to the globin family. In terms of assembly, heterotetramer of two alpha chains and two beta chains. In terms of tissue distribution, red blood cells.

In terms of biological role, involved in oxygen transport from the lung to the various peripheral tissues. This chain is Hemoglobin subunit alpha-1/2, found in Oryctolagus cuniculus (Rabbit).